The chain runs to 310 residues: Methionyl-tRNA formyltransferase (310 aa).

S109 to P112 lines the (6S)-5,6,7,8-tetrahydrofolate pocket.

This sequence belongs to the Fmt family.

The enzyme catalyses L-methionyl-tRNA(fMet) + (6R)-10-formyltetrahydrofolate = N-formyl-L-methionyl-tRNA(fMet) + (6S)-5,6,7,8-tetrahydrofolate + H(+). In terms of biological role, attaches a formyl group to the free amino group of methionyl-tRNA(fMet). The formyl group appears to play a dual role in the initiator identity of N-formylmethionyl-tRNA by promoting its recognition by IF2 and preventing the misappropriation of this tRNA by the elongation apparatus. This Chloroflexus aurantiacus (strain ATCC 29366 / DSM 635 / J-10-fl) protein is Methionyl-tRNA formyltransferase.